Consider the following 82-residue polypeptide: MKRNNMKRARMEQSRRPKKNPLKAEGIEQVDYKNYALLRKFISDRGKIRSRRVTGLTPQQQREVATAIKNAREMALLPFNSR.

Residues 1–25 form a disordered region; that stretch reads MKRNNMKRARMEQSRRPKKNPLKAE.

This sequence belongs to the bacterial ribosomal protein bS18 family. As to quaternary structure, part of the 30S ribosomal subunit. Forms a tight heterodimer with protein bS6.

In terms of biological role, binds as a heterodimer with protein bS6 to the central domain of the 16S rRNA, where it helps stabilize the platform of the 30S subunit. The sequence is that of Small ribosomal subunit protein bS18 from Corynebacterium urealyticum (strain ATCC 43042 / DSM 7109).